The primary structure comprises 214 residues: Adenylate kinase (214 aa).

10–15 (GAGKGT) provides a ligand contact to ATP. Residues 30–59 (STGDMLRAAVKAGSELGLKAKEIMDAGKLV) form an NMP region. Residues Thr-31, Arg-36, 57–59 (KLV), 85–88 (GFPR), and Gln-92 each bind AMP. The interval 122–159 (GRRVHAASGRVYHVKFNPPKVEDKDDVTGEELTIRKDD) is LID. Residues Arg-123 and 132–133 (VY) contribute to the ATP site. Residues Arg-156 and Arg-167 each contribute to the AMP site. An ATP-binding site is contributed by Arg-200.

The protein belongs to the adenylate kinase family. As to quaternary structure, monomer.

The protein localises to the cytoplasm. The catalysed reaction is AMP + ATP = 2 ADP. It functions in the pathway purine metabolism; AMP biosynthesis via salvage pathway; AMP from ADP: step 1/1. Its function is as follows. Catalyzes the reversible transfer of the terminal phosphate group between ATP and AMP. Plays an important role in cellular energy homeostasis and in adenine nucleotide metabolism. The sequence is that of Adenylate kinase from Yersinia pseudotuberculosis serotype O:1b (strain IP 31758).